Here is a 91-residue protein sequence, read N- to C-terminus: MGLEDEQRMLTGSGDPKEEEEEEEELVDPLTTVREQCEQLEKCVKARERLELCDERVSSRSQTEEDCTEELLDFLHARDHCVAHKLFNSLK.

A mitochondrion-targeting transit peptide spans 1-13 (MGLEDEQRMLTGS). Positions 1-30 (MGLEDEQRMLTGSGDPKEEEEEEEELVDPL) are disordered. Acidic residues predominate over residues 17–27 (KEEEEEEEELV). 2 cysteine pairs are disulfide-bonded: cysteine 37–cysteine 81 and cysteine 53–cysteine 67. An N6-acetyllysine modification is found at lysine 42. The residue at position 85 (lysine 85) is an N6-acetyllysine.

Belongs to the UQCRH/QCR6 family. In terms of assembly, component of the ubiquinol-cytochrome c oxidoreductase (cytochrome b-c1 complex, complex III, CIII), a multisubunit enzyme composed of 11 subunits. The complex is composed of 3 respiratory subunits cytochrome b, cytochrome c1 and Rieske protein UQCRFS1, 2 core protein subunits UQCRC1/QCR1 and UQCRC2/QCR2, and 6 low-molecular weight protein subunits UQCRH/QCR6, UQCRB/QCR7, UQCRQ/QCR8, UQCR10/QCR9, UQCR11/QCR10 and subunit 9, the cleavage product of Rieske protein UQCRFS1. The complex exists as an obligatory dimer and forms supercomplexes (SCs) in the inner mitochondrial membrane with NADH-ubiquinone oxidoreductase (complex I, CI) and cytochrome c oxidase (complex IV, CIV), resulting in different assemblies (supercomplex SCI(1)III(2)IV(1) and megacomplex MCI(2)III(2)IV(2)).

The protein localises to the mitochondrion inner membrane. Functionally, component of the ubiquinol-cytochrome c oxidoreductase, a multisubunit transmembrane complex that is part of the mitochondrial electron transport chain which drives oxidative phosphorylation. The respiratory chain contains 3 multisubunit complexes succinate dehydrogenase (complex II, CII), ubiquinol-cytochrome c oxidoreductase (cytochrome b-c1 complex, complex III, CIII) and cytochrome c oxidase (complex IV, CIV), that cooperate to transfer electrons derived from NADH and succinate to molecular oxygen, creating an electrochemical gradient over the inner membrane that drives transmembrane transport and the ATP synthase. The cytochrome b-c1 complex catalyzes electron transfer from ubiquinol to cytochrome c, linking this redox reaction to translocation of protons across the mitochondrial inner membrane, with protons being carried across the membrane as hydrogens on the quinol. In the process called Q cycle, 2 protons are consumed from the matrix, 4 protons are released into the intermembrane space and 2 electrons are passed to cytochrome c. The chain is Cytochrome b-c1 complex subunit 6, mitochondrial (UQCRH) from Bos taurus (Bovine).